The sequence spans 799 residues: Putative aconitate hydratase, mitochondrial (799 aa).

The transit peptide at 1–32 (MVRQLVWQRATASRRLAPKCLSPQQLFARRGL) directs the protein to the mitochondrion. Substrate contacts are provided by residues glutamine 108 and 201 to 203 (DSH). [4Fe-4S] cluster is bound by residues cysteine 399, cysteine 462, and cysteine 465. Substrate-binding residues include arginine 489 and arginine 494. The interval 538 to 564 (KFRPPQGSDLPSAGFADGNPALQPSAG) is disordered. 685 to 686 (AR) provides a ligand contact to substrate.

Belongs to the aconitase/IPM isomerase family.

The protein localises to the mitochondrion. In terms of biological role, has no detectable activity towards cis-acontiate or cis-homoaconitate. The chain is Putative aconitate hydratase, mitochondrial (acoB) from Aspergillus fumigatus (strain ATCC MYA-4609 / CBS 101355 / FGSC A1100 / Af293) (Neosartorya fumigata).